A 225-amino-acid polypeptide reads, in one-letter code: UPF0758 protein BPP1850 (225 aa).

In terms of domain architecture, MPN spans 103–225; it reads ALANPDLVRR…TVSMAAQGHL (123 aa). H174, H176, and D187 together coordinate Zn(2+). The JAMM motif signature appears at 174-187; sequence HNHPGGTAAASAAD.

Belongs to the UPF0758 family.

The chain is UPF0758 protein BPP1850 from Bordetella parapertussis (strain 12822 / ATCC BAA-587 / NCTC 13253).